The sequence spans 241 residues: Small ribosomal subunit protein uS3c (241 aa).

Belongs to the universal ribosomal protein uS3 family. Part of the 30S ribosomal subunit.

It is found in the plastid. The sequence is that of Small ribosomal subunit protein uS3c (rps3) from Helicosporidium sp. subsp. Simulium jonesii (Green alga).